Here is a 592-residue protein sequence, read N- to C-terminus: AT-rich interactive domain-containing protein 5A (592 aa).

Positions 1-53 are disordered; sequence MAPPVKGKRKQSEEGEPLDPPVSPQPDGEPRSRSPVRLEEPPEAGREREEEQE. An interaction with SOX9 region spans residues 1–299; the sequence is MAPPVKGKRK…AAPPLESPQS (299 aa). Ser-23 carries the post-translational modification Phosphoserine. Residues 28–49 show a composition bias toward basic and acidic residues; that stretch reads GEPRSRSPVRLEEPPEAGRERE. The region spanning 52 to 144 is the ARID domain; sequence QEEEQAFLVS…LVLPYVRHLK (93 aa). Glycyl lysine isopeptide (Lys-Gly) (interchain with G-Cter in ubiquitin) cross-links involve residues Lys-82 and Lys-91. Residues 143–225 form a disordered region; the sequence is LKGEDDKPLP…RGPAAGPSLP (83 aa). The span at 162-186 shows a compositional bias: basic and acidic residues; the sequence is MAKEPRGDDGATERPKKVKEEKRVD. Ser-253 carries the post-translational modification Phosphoserine. Positions 277–333 are disordered; it reads CRHGAGGEPQAPPAAPPLESPQSPGGPAEDSRHRLTPLEGRQAPGGGLWGETQAGPR. A compositionally biased stretch (pro residues) spans 286–295; the sequence is QAPPAAPPLE. Residues Ser-438 and Ser-463 each carry the phosphoserine modification.

Interacts with SOX9. Interacts with ESR1. Interacts with RORC. Phosphorylated by MAPK14 on serine residues involving a TLR4 signaling pathway upon lipopolysaccharide (LPS) stimulation leading to its ubiquitination and proteasomal degradation. In terms of processing, ubiquitinated leading to proteasomal degradation; involving WWP1 linked to MAPK14-mediated phosphorylation upon LPS stimulation.

It is found in the nucleus. DNA-binding protein that may regulate transcription and act as a repressor by binding to AT-rich stretches in the promoter region of target genes. May act as repressor and down-regulate enhancer-dependent gene expressison. May positively regulate chondrocyte-specific transcription such as of COL2A1 in collaboration with SOX9 and positively regulate histone H3 acetylation at chondrocyte-specific genes. May stimulate early-stage chondrocyte differentiation and inhibit later stage differention. Can repress ESR1-mediated transcriptional activation; proposed to act as corepressor for selective nuclear hormone receptors. As an RNA-binding protein, involved in the regulation of inflammatory response by stabilizing selective inflammation-related mRNAs, such as STAT3 and TBX21. Also stabilizes IL6 mRNA. Binds to stem loop structures located in the 3'UTRs of IL6, STAT3 and TBX21 mRNAs; at least for STAT3 prevents binding of ZC3H12A to the mRNA stem loop structure thus inhibiting its degradation activity. Contributes to elevated IL6 levels possibly implicated in autoimmunity processes. IL6-dependent stabilization of STAT3 mRNA may promote differentiation of naive CD4+ T-cells into T-helper Th17 cells. In CD4+ T-cells may also inhibit RORC-induced Th17 cell differentiation independently of IL6 signaling. Stabilization of TBX21 mRNA contributes to elevated interferon-gamma secretion in Th1 cells possibly implicated in the establishment of septic shock. Stabilizes TNFRSF4/OX40 mRNA by binding to the conserved stem loop structure in its 3'UTR; thereby competing with the mRNA-destabilizing functions of RC3H1 and endoribonuclease ZC3H12A. The polypeptide is AT-rich interactive domain-containing protein 5A (ARID5A) (Bos taurus (Bovine)).